A 643-amino-acid polypeptide reads, in one-letter code: MVHNISLSSRKALHNVHLPYMVQLPKPTGYNVALKNAAEGYDKARRMVAWLYDIADYESSIPQTFTLQQKTDKYTWELSDNFPPHLAVVPPDQSVSAPSIFSPVRLAQTLLIMSSLWYDDHTDLAPGPEQNTMQKLTQWNQERHKDQGWLIKDMFNAPNIGLRNDWYTDEVFAQQFFTGPNSTTITLASDVWLTAFTSEAKAQGKDKVIALFESAPPNSFYVQDFSDFRRRMGAKPDEELFNDSDGAMRYGCAAVALFYLTAMGKLHPLAIIPDYKGSMAASVTIFNKRTNPLDISVNQANDWPWRYAKTCVLSSDWALHEMIIHLNNTHLVEEAVIVAAQRKLSPSHIVFRLLEPHWVVTLSLNALARSVLIPEVIVPIAGFSAPHIFQFIRESFTNFDWKSLYVPADLESRGFPVDQLNSPKFHNYAYARDINDMWTTLKKFVSSVLQDAQYYPDDASVAGDTQIQAWCDEMRSGMGAGMTNFPESITTVDDLVNMVTMCIHIAAPQHTAVNYLQQYYQTFVPNKPSALFSPLPTSIAQLQKYTESDLMAALPLNAKRQWLLMAQIPYLLSMQVQEDENIVTYAANASTDKDPIIASAGRQLAADLKKLAAVFLVNSAQLDDQNTPYDVLAPEQLANAIVI.

Residues 166-643 (WYTDEVFAQQ…PEQLANAIVI (478 aa)) enclose the Lipoxygenase domain. 5 residues coordinate Mn(2+): histidine 325, histidine 330, histidine 510, asparagine 514, and isoleucine 643.

Belongs to the lipoxygenase family. It depends on Mn(2+) as a cofactor.

The catalysed reaction is (9Z,12Z)-octadecadienoate + O2 = (13S)-hydroperoxy-(9Z,11E)-octadecadienoate. Functionally, lipoxygenase that metabolizes linoleic and alpha-linolenic acids to 13S-hydroperoxy fatty acids. The chain is Manganese lipoxygenase from Pleurotus sapidus (Oyster mushroom).